The following is a 301-amino-acid chain: tRNA dimethylallyltransferase 1 (301 aa).

10–17 (GPTASGKT) contacts ATP. 12-17 (TASGKT) provides a ligand contact to substrate. An interaction with substrate tRNA region spans residues 35 to 38 (DSRQ).

The protein belongs to the IPP transferase family. As to quaternary structure, monomer. It depends on Mg(2+) as a cofactor.

The enzyme catalyses adenosine(37) in tRNA + dimethylallyl diphosphate = N(6)-dimethylallyladenosine(37) in tRNA + diphosphate. In terms of biological role, catalyzes the transfer of a dimethylallyl group onto the adenine at position 37 in tRNAs that read codons beginning with uridine, leading to the formation of N6-(dimethylallyl)adenosine (i(6)A). This Geotalea uraniireducens (strain Rf4) (Geobacter uraniireducens) protein is tRNA dimethylallyltransferase 1.